A 557-amino-acid polypeptide reads, in one-letter code: Hepatocyte nuclear factor 1-beta (557 aa).

The dimerization stretch occupies residues 1–31; the sequence is MVSKLTSLQQELLSALLSSGVTKEVLVQALE. An HNF-p1 domain is found at 1–32; that stretch reads MVSKLTSLQQELLSALLSSGVTKEVLVQALEE. Phosphoserine occurs at positions 49, 52, 75, and 80. The disordered stretch occupies residues 64–85; sequence TLTNGHAKGRLSGDEGSEDGDD. Residues 93 to 188 enclose the POU-specific atypical domain; sequence KELQALNTEE…ILRQFNQTVQ (96 aa). The segment at residues 231 to 311 is a DNA-binding region (homeobox; HNF1-type); the sequence is MRRNRFKWGP…NRRKEEAFRQ (81 aa). Residues 324-370 form a disordered region; that stretch reads HSLNPLLSHGSPHHQPSSSPPNKLSGVRYSQQGNNEVTSSSTISHHG. Residues 328–344 show a composition bias toward low complexity; it reads PLLSHGSPHHQPSSSPP. A compositionally biased stretch (polar residues) spans 351–370; sequence RYSQQGNNEVTSSSTISHHG.

Belongs to the HNF1 homeobox family. In terms of assembly, binds DNA as a dimer. Can form homodimer or heterodimer with HNF1-alpha. Interacts (via HNF-p1 domain) with PCBD1; the interaction increases its transactivation activity.

Its subcellular location is the nucleus. Its function is as follows. Transcription factor that binds to the inverted palindrome 5'-GTTAATNATTAAC-3'. Binds to the FPC element in the cAMP regulatory unit of the PLAU gene. Transcriptional activity is increased by coactivator PCBD1. The protein is Hepatocyte nuclear factor 1-beta (HNF1B) of Pongo abelii (Sumatran orangutan).